The primary structure comprises 596 residues: ATP-dependent lipid A-core flippase (596 aa).

The next 6 membrane-spanning stretches (helical) occupy residues 34-54 (VWVL…EAGI), 80-100 (AAVV…GYLL), 138-158 (AVVF…ITLV), 164-184 (VVFL…IVAI), 263-283 (QPLT…IAVV), and 292-312 (VGGF…LKHL). The ABC transmembrane type-1 domain occupies 38-321 (VAGVLAMAAV…LMDVNQPLQR (284 aa)). Positions 353-589 (IEFSHVSFSY…GGLYAHLHRI (237 aa)) constitute an ABC transporter domain. 389 to 396 (GPSGSGKT) lines the ATP pocket.

Belongs to the ABC transporter superfamily. Lipid exporter (TC 3.A.1.106) family. Homodimer.

It is found in the cell inner membrane. It carries out the reaction ATP + H2O + lipid A-core oligosaccharideSide 1 = ADP + phosphate + lipid A-core oligosaccharideSide 2.. Its function is as follows. Involved in lipopolysaccharide (LPS) biosynthesis. Translocates lipid A-core from the inner to the outer leaflet of the inner membrane. Transmembrane domains (TMD) form a pore in the inner membrane and the ATP-binding domain (NBD) is responsible for energy generation. This is ATP-dependent lipid A-core flippase from Burkholderia thailandensis (strain ATCC 700388 / DSM 13276 / CCUG 48851 / CIP 106301 / E264).